The primary structure comprises 597 residues: Elongation factor 4 (597 aa).

Residues 2 to 184 (DHIRNFSIIA…ALIAKVPPPK (183 aa)) form the tr-type G domain. GTP-binding positions include 14 to 19 (DHGKST) and 131 to 134 (NKID).

This sequence belongs to the TRAFAC class translation factor GTPase superfamily. Classic translation factor GTPase family. LepA subfamily.

The protein resides in the cell inner membrane. The enzyme catalyses GTP + H2O = GDP + phosphate + H(+). Required for accurate and efficient protein synthesis under certain stress conditions. May act as a fidelity factor of the translation reaction, by catalyzing a one-codon backward translocation of tRNAs on improperly translocated ribosomes. Back-translocation proceeds from a post-translocation (POST) complex to a pre-translocation (PRE) complex, thus giving elongation factor G a second chance to translocate the tRNAs correctly. Binds to ribosomes in a GTP-dependent manner. This Cupriavidus pinatubonensis (strain JMP 134 / LMG 1197) (Cupriavidus necator (strain JMP 134)) protein is Elongation factor 4.